The primary structure comprises 82 residues: Small ribosomal subunit protein bS16 (82 aa).

The protein belongs to the bacterial ribosomal protein bS16 family.

The sequence is that of Small ribosomal subunit protein bS16 from Acidobacterium capsulatum (strain ATCC 51196 / DSM 11244 / BCRC 80197 / JCM 7670 / NBRC 15755 / NCIMB 13165 / 161).